Here is an 81-residue protein sequence, read N- to C-terminus: Putative defensin-like protein 265 (81 aa).

Positions 1–26 are cleaved as a signal peptide; sequence MEKTVSRKVVVLAILLSLSCLCIAKA. 3 cysteine pairs are disulfide-bonded: Cys-48/Cys-66, Cys-54/Cys-71, and Cys-58/Cys-73.

It belongs to the DEFL family.

It is found in the secreted. This chain is Putative defensin-like protein 265, found in Arabidopsis thaliana (Mouse-ear cress).